The sequence spans 147 residues: D-aminoacyl-tRNA deacylase (147 aa).

The short motif at 136 to 137 (GP) is the Gly-cisPro motif, important for rejection of L-amino acids element.

It belongs to the DTD family. In terms of assembly, homodimer.

The protein localises to the cytoplasm. It carries out the reaction glycyl-tRNA(Ala) + H2O = tRNA(Ala) + glycine + H(+). It catalyses the reaction a D-aminoacyl-tRNA + H2O = a tRNA + a D-alpha-amino acid + H(+). Its function is as follows. An aminoacyl-tRNA editing enzyme that deacylates mischarged D-aminoacyl-tRNAs. Also deacylates mischarged glycyl-tRNA(Ala), protecting cells against glycine mischarging by AlaRS. Acts via tRNA-based rather than protein-based catalysis; rejects L-amino acids rather than detecting D-amino acids in the active site. By recycling D-aminoacyl-tRNA to D-amino acids and free tRNA molecules, this enzyme counteracts the toxicity associated with the formation of D-aminoacyl-tRNA entities in vivo and helps enforce protein L-homochirality. The protein is D-aminoacyl-tRNA deacylase of Streptococcus thermophilus (strain CNRZ 1066).